We begin with the raw amino-acid sequence, 173 residues long: Large ribosomal subunit protein uL10 (173 aa).

Belongs to the universal ribosomal protein uL10 family. As to quaternary structure, part of the ribosomal stalk of the 50S ribosomal subunit. The N-terminus interacts with L11 and the large rRNA to form the base of the stalk. The C-terminus forms an elongated spine to which L12 dimers bind in a sequential fashion forming a multimeric L10(L12)X complex.

Its function is as follows. Forms part of the ribosomal stalk, playing a central role in the interaction of the ribosome with GTP-bound translation factors. The sequence is that of Large ribosomal subunit protein uL10 from Thiobacillus denitrificans (strain ATCC 25259 / T1).